We begin with the raw amino-acid sequence, 575 residues long: Phosphoenolpyruvate-protein phosphotransferase (575 aa).

Histidine 191 functions as the Tele-phosphohistidine intermediate in the catalytic mechanism. Residues arginine 298 and arginine 334 each coordinate phosphoenolpyruvate. Mg(2+)-binding residues include glutamate 435 and aspartate 459. Residues 458-459 and arginine 469 contribute to the phosphoenolpyruvate site; that span reads ND. Cysteine 506 acts as the Proton donor in catalysis.

The protein belongs to the PEP-utilizing enzyme family. As to quaternary structure, homodimer. Mg(2+) is required as a cofactor.

It is found in the cytoplasm. The enzyme catalyses L-histidyl-[protein] + phosphoenolpyruvate = N(pros)-phospho-L-histidyl-[protein] + pyruvate. Its function is as follows. General (non sugar-specific) component of the phosphoenolpyruvate-dependent sugar phosphotransferase system (sugar PTS). This major carbohydrate active-transport system catalyzes the phosphorylation of incoming sugar substrates concomitantly with their translocation across the cell membrane. Enzyme I transfers the phosphoryl group from phosphoenolpyruvate (PEP) to the phosphoryl carrier protein (HPr). The polypeptide is Phosphoenolpyruvate-protein phosphotransferase (ptsI) (Lactococcus lactis subsp. lactis (strain IL1403) (Streptococcus lactis)).